A 107-amino-acid chain; its full sequence is Small ribosomal subunit protein uS17 (107 aa).

The protein belongs to the universal ribosomal protein uS17 family. As to quaternary structure, part of the 30S ribosomal subunit.

In terms of biological role, one of the primary rRNA binding proteins, it binds specifically to the 5'-end of 16S ribosomal RNA. This chain is Small ribosomal subunit protein uS17, found in Aquifex aeolicus (strain VF5).